A 468-amino-acid polypeptide reads, in one-letter code: Probable Xaa-Pro aminopeptidase PEPP (468 aa).

Residues Asp264, Asp275, Glu398, and Glu438 each coordinate Mn(2+).

It belongs to the peptidase M24B family. The cofactor is Mn(2+).

The catalysed reaction is Release of any N-terminal amino acid, including proline, that is linked to proline, even from a dipeptide or tripeptide.. In terms of biological role, catalyzes the removal of a penultimate prolyl residue from the N-termini of peptides. The sequence is that of Probable Xaa-Pro aminopeptidase PEPP (PEPP) from Paracoccidioides brasiliensis (strain Pb03).